The primary structure comprises 271 residues: Type III pantothenate kinase (271 aa).

6–13 (DVRNTHTV) lines the ATP pocket. A substrate-binding site is contributed by 109–112 (GADR). Residue aspartate 111 is the Proton acceptor of the active site. Aspartate 131 is a K(+) binding site. Serine 134 contacts ATP. Threonine 186 lines the substrate pocket.

This sequence belongs to the type III pantothenate kinase family. In terms of assembly, homodimer. It depends on NH4(+) as a cofactor. K(+) serves as cofactor.

It is found in the cytoplasm. The catalysed reaction is (R)-pantothenate + ATP = (R)-4'-phosphopantothenate + ADP + H(+). The protein operates within cofactor biosynthesis; coenzyme A biosynthesis; CoA from (R)-pantothenate: step 1/5. Its function is as follows. Catalyzes the phosphorylation of pantothenate (Pan), the first step in CoA biosynthesis. In Mycobacteroides abscessus (strain ATCC 19977 / DSM 44196 / CCUG 20993 / CIP 104536 / JCM 13569 / NCTC 13031 / TMC 1543 / L948) (Mycobacterium abscessus), this protein is Type III pantothenate kinase.